Here is a 365-residue protein sequence, read N- to C-terminus: Transcription factor KUA1 (365 aa).

The tract at residues 1–21 is disordered; it reads MTRRCSHCNHNGHNSRTCPNR. The CCHC-type zinc finger occupies 3-20; sequence RRCSHCNHNGHNSRTCPN. A compositionally biased stretch (polar residues) spans 8-18; the sequence is CNHNGHNSRTC. A R/KLFGV (transcriptional repression) motif is present at residues 24–28; sequence KLFGV. The interval 41–99 is disordered; the sequence is MGNLSHYTGSGSGGHGTGSNTPGSPGDVPDHVAGDGYASEDFVAGSSSSRERKKGTPWT. The HTH myb-type domain maps to 90–146; it reads RERKKGTPWTEEEHRMFLLGLQKLGKGDWRGISRNYVTTRTPTQVASHAQKYFIRQS. Residues 118-142 constitute a DNA-binding region (H-T-H motif); sequence WRGISRNYVTTRTPTQVASHAQKYF. 2 disordered regions span residues 214–254 and 321–365; these read SMDS…QPQL and ESNK…IHAL. The span at 220-254 shows a compositional bias: low complexity; sequence STTGEPTATAAAASSSSRLEETTQLQSQLQPQPQL. The segment covering 343–355 has biased composition (polar residues); that stretch reads RQSAFHPNPSSDS.

As to expression, expressed ubiquitously, except in hypocotyls, root tips and lateral root primordia.

It is found in the nucleus. Transcriptional repressor. Direct regulator of the transcription of peroxidase (Prxs) and reactive oxygen species (ROS)-related genes via the recognition of 5'-ATCACA-3' motif. Binds to 5'-TATCCA-3' motif (TA box) and represses the activity of corresponding promoters (e.g. sugar response genes). Regulates hypocotyl elongation in response to darkness by enhancing auxin accumulation in a phytochrome-interacting factor (PIF) proteins-dependent manner. Promotes lateral roots formation. Promotes cell expansion during leaves development via the modulation of cell wall-located Prxs. Plays a critical role in developmentally regulated and dark-induced onset of leaf senescence by repressing the transcription of several genes involved in chloroplast function and responses to light and auxin. Promotes responses to auxin, abscisic acid (ABA), and ethylene. The sequence is that of Transcription factor KUA1 from Arabidopsis thaliana (Mouse-ear cress).